The primary structure comprises 206 residues: Small ribosomal subunit protein uS4 (206 aa).

Positions 96 to 156 (CRLDNVVYRM…EKSLNQLRIV (61 aa)) constitute an S4 RNA-binding domain.

The protein belongs to the universal ribosomal protein uS4 family. Part of the 30S ribosomal subunit. Contacts protein S5. The interaction surface between S4 and S5 is involved in control of translational fidelity.

Functionally, one of the primary rRNA binding proteins, it binds directly to 16S rRNA where it nucleates assembly of the body of the 30S subunit. With S5 and S12 plays an important role in translational accuracy. This is Small ribosomal subunit protein uS4 from Pseudomonas entomophila (strain L48).